The following is a 228-amino-acid chain: L-ornithine N5-acetyltransferase NATA1 (228 aa).

Positions 1-21 are disordered; that stretch reads MAPPTAAPEPNTVPETSPTGH. Residues 77 to 227 enclose the N-acetyltransferase domain; that stretch reads VFLLEISPSP…DALQAIDKLN (151 aa). Residues 153–155, 161–166, 192–195, and Tyr-199 contribute to the acetyl-CoA site; these read IFM, RKGFGK, and NVNA.

The protein belongs to the acetyltransferase family.

Its function is as follows. Acetyltransferase that converts ornithine to N5-acetylornithine, which is likely used in plant defense. This Arabidopsis thaliana (Mouse-ear cress) protein is L-ornithine N5-acetyltransferase NATA1 (NATA1).